The sequence spans 563 residues: F-box/kelch-repeat protein At5g42350 (563 aa).

The F-box domain occupies 129-175 (YRKHVYLPDDILEMCLMRLPLTSLLNAHLVCKKWQSMANTQRFLQMR). Kelch repeat units follow at residues 184–231 (WLFL…SIHE), 232–282 (EIYI…ATEV), and 355–402 (VLIA…IICN).

The chain is F-box/kelch-repeat protein At5g42350 from Arabidopsis thaliana (Mouse-ear cress).